The primary structure comprises 744 residues: Receptor-like serine/threonine-protein kinase ALE2 (744 aa).

The first 19 residues, 1-19, serve as a signal peptide directing secretion; sequence MRNFAMLLLLILLLHSLAS. The Extracellular segment spans residues 20–260; it reads FPICFARLFP…SQGIGFRTIA (241 aa). Positions 59–68 are enriched in pro residues; sequence PAFSPNPSRI. The interval 59–79 is disordered; it reads PAFSPNPSRIPPLRHKGHHRH. Over residues 70–79 the composition is skewed to basic residues; it reads PLRHKGHHRH. Residues N87, N186, N204, N243, and N249 are each glycosylated (N-linked (GlcNAc...) asparagine). Residues 261 to 281 traverse the membrane as a helical segment; the sequence is IIALSGFVLILVLVGAISIIV. Residues 282–744 are Cytoplasmic-facing; the sequence is KWKKIGKSSN…HLWSGNGDWL (463 aa). The region spanning 349 to 619 is the Protein kinase domain; that stretch reads FSAKRVLGEG…GEVVQALKLI (271 aa). ATP contacts are provided by residues 355-363 and K377; that span reads LGEGGFGRV. The active-site Proton acceptor is D470. Disordered regions lie at residues 681 to 705 and 722 to 744; these read EDMENRPHSASSIPRVGGLILPNRS and GSMSEHGGPSSSRHLWSGNGDWL.

Belongs to the protein kinase superfamily. Ser/Thr protein kinase family. In terms of processing, autophosphorylated and phosphorylated by ACR4.

It is found in the cell membrane. The catalysed reaction is L-seryl-[protein] + ATP = O-phospho-L-seryl-[protein] + ADP + H(+). It carries out the reaction L-threonyl-[protein] + ATP = O-phospho-L-threonyl-[protein] + ADP + H(+). Functionally, required during the differentiation of the protoderm into shoots epidermis and cuticle. The polypeptide is Receptor-like serine/threonine-protein kinase ALE2 (ALE2) (Arabidopsis thaliana (Mouse-ear cress)).